Consider the following 215-residue polypeptide: MTAFKRVLIAMISALLAGTTGMFVSAGAAHAGLDNELSLVDGQDRTLTVQQWDTFLNGVFPLDRNRLTREWFHSGRAKYIVAGPGADEFEGTLELGYQIGFPWSLGVGINFSYTTPNILIDDGDITAPPFGLNSVITPNLFPGVSISADLGNGPGIQEVATFSVDVSGPAGGVAVSNAHGTVTGAAGGVLLRPFARLIASTGDSVTTYGEPWNMN.

Positions 1-31 (MTAFKRVLIAMISALLAGTTGMFVSAGAAHA) are cleaved as a signal peptide.

This sequence belongs to the mycobacterial porin (TC 1.B.24) family. As to quaternary structure, octamers. Probably forms a goblet with the wide end on the exterior of the outer membrane and a central channel. It is not known if mixed oligomers of MspB with other Msp subunits form in vivo.

The protein resides in the cell outer membrane. It is found in the secreted. It localises to the cell wall. Functionally, a backup porin induced when MspA, the major porin, is deleted. Probably forms a water-filled channel which favors the permeation of cations. There are about 2400 porins in wild-type, 800 in an mspA deletion and 150 in a double mspA-mspC deletion. A triple mspA-mspC-mspD deletion mutant has low but detectable channel activity. Different conductance values with maxima at 2.3 and 4.6 nanosiemens might be caused by a simultaneous reconstitution of MspB channels into the membrane or by the existence of different MspB conformations. This Mycolicibacterium smegmatis (strain ATCC 700084 / mc(2)155) (Mycobacterium smegmatis) protein is Porin MspB (mspB).